Here is a 194-residue protein sequence, read N- to C-terminus: Large ribosomal subunit protein bL9 (194 aa).

It belongs to the bacterial ribosomal protein bL9 family.

Functionally, binds to the 23S rRNA. The chain is Large ribosomal subunit protein bL9 from Paracoccus denitrificans (strain Pd 1222).